The following is an 80-amino-acid chain: Trefoil factor 3 (80 aa).

The signal sequence occupies residues 1–21 (MAARALCMLGLVLALLSSSSA). The 44-residue stretch at 30–73 (NQCAVPAKDRVDCGYPHVTPKECNNRGCCFDSRIPGVPWCFKPL) folds into the P-type domain. Disulfide bonds link cysteine 32/cysteine 58, cysteine 42/cysteine 57, and cysteine 52/cysteine 69.

Monomer. Homodimer; disulfide-linked. Expressed in goblet cells of the intestines and colon (at protein level). Expressed by goblet cells of small and large intestinal epithelia and also by the uterus. Also expressed in the hypothalamus where it is detected in paraventricular, periventricular and supraoptic nuclei (at protein level).

The protein resides in the secreted. The protein localises to the extracellular space. It localises to the extracellular matrix. It is found in the cytoplasm. Involved in the maintenance and repair of the intestinal mucosa. Promotes the mobility of epithelial cells in healing processes (motogen). The polypeptide is Trefoil factor 3 (TFF3) (Homo sapiens (Human)).